The sequence spans 787 residues: LPS-assembly protein LptD (787 aa).

The signal sequence occupies residues 1–24 (MKKSFPTLLATLVWSALYSQHALA).

Belongs to the LptD family. In terms of assembly, component of the lipopolysaccharide transport and assembly complex. Interacts with LptE and LptA.

It localises to the cell outer membrane. Its function is as follows. Together with LptE, is involved in the assembly of lipopolysaccharide (LPS) at the surface of the outer membrane. The protein is LPS-assembly protein LptD of Pectobacterium atrosepticum (strain SCRI 1043 / ATCC BAA-672) (Erwinia carotovora subsp. atroseptica).